Consider the following 505-residue polypeptide: Protein nucleotidyltransferase YdiU (505 aa).

Glycine 102, glycine 104, arginine 105, lysine 125, aspartate 137, glycine 138, arginine 188, and arginine 195 together coordinate ATP. Residue aspartate 264 is the Proton acceptor of the active site. Mg(2+) contacts are provided by asparagine 265 and aspartate 274. Aspartate 274 is an ATP binding site.

This sequence belongs to the SELO family. The cofactor is Mg(2+). Requires Mn(2+) as cofactor.

It catalyses the reaction L-seryl-[protein] + ATP = 3-O-(5'-adenylyl)-L-seryl-[protein] + diphosphate. The catalysed reaction is L-threonyl-[protein] + ATP = 3-O-(5'-adenylyl)-L-threonyl-[protein] + diphosphate. The enzyme catalyses L-tyrosyl-[protein] + ATP = O-(5'-adenylyl)-L-tyrosyl-[protein] + diphosphate. It carries out the reaction L-histidyl-[protein] + UTP = N(tele)-(5'-uridylyl)-L-histidyl-[protein] + diphosphate. It catalyses the reaction L-seryl-[protein] + UTP = O-(5'-uridylyl)-L-seryl-[protein] + diphosphate. The catalysed reaction is L-tyrosyl-[protein] + UTP = O-(5'-uridylyl)-L-tyrosyl-[protein] + diphosphate. In terms of biological role, nucleotidyltransferase involved in the post-translational modification of proteins. It can catalyze the addition of adenosine monophosphate (AMP) or uridine monophosphate (UMP) to a protein, resulting in modifications known as AMPylation and UMPylation. The protein is Protein nucleotidyltransferase YdiU of Nitrobacter winogradskyi (strain ATCC 25391 / DSM 10237 / CIP 104748 / NCIMB 11846 / Nb-255).